A 320-amino-acid polypeptide reads, in one-letter code: MPTGDFDSKPSWADQVEEEGEDDKCVTSELLKGIPLATGDTSPEPELLPGAPLPPPKEVINGNIKTVTEYKIDEDGKKFKIVRTFRIETRKASKAVARRKNWKKFGNSEFDPPGPNVATTTVSDDVSMTFITSKEDLNCQEEEDPMNKLKGQKIVSCRICKGDHWTTRCPYKDTLGPMQKELAEQLGLSTGEKEKLPGELEPVQATQNKTGKYVPPSLRDGASRRGESMQPNRRADDNATIRVTNLSEDTRETDLQELFRPFGSISRIYLAKDKTTGQSKGFAFISFHRREDAARAIAGVSGFGYDHLILNVEWAKPSTN.

Residues Met1–Val59 are disordered. Phosphoserine is present on residues Ser8 and Ser11. Phosphothreonine is present on residues Thr38 and Thr41. 4 positions are modified to phosphoserine: Ser42, Ser189, Ser223, and Ser264. Positions Lys209–Arg234 are disordered. Residues Gly221–Arg234 are compositionally biased toward basic and acidic residues. The region spanning Ala239–Pro317 is the RRM domain.

Component of the eukaryotic translation initiation factor 3 (eIF-3) complex, which is composed of 13 subunits: EIF3A, EIF3B, EIF3C, EIF3D, EIF3E, EIF3F, EIF3G, EIF3H, EIF3I, EIF3J, EIF3K, EIF3L and EIF3M. The eIF-3 complex appears to include 3 stable modules: module A is composed of EIF3A, EIF3B, EIF3G and EIF3I; module B is composed of EIF3F, EIF3H, and EIF3M; and module C is composed of EIF3C, EIF3D, EIF3E, EIF3K and EIF3L. EIF3C of module C binds EIF3B of module A and EIF3H of module B, thereby linking the three modules. EIF3J is a labile subunit that binds to the eIF-3 complex via EIF3B. The eIF-3 complex interacts with RPS6KB1 under conditions of nutrient depletion. Mitogenic stimulation leads to binding and activation of a complex composed of MTOR and RPTOR, leading to phosphorylation and release of RPS6KB1 and binding of EIF4B to eIF-3. Interacts (via C-terminus) with AIFM1 (via N-terminus). Interacts with DHX33; the interaction is independent of RNA. Phosphorylated. Phosphorylation is enhanced upon serum stimulation.

The protein resides in the cytoplasm. The protein localises to the nucleus. It is found in the perinuclear region. Functionally, RNA-binding component of the eukaryotic translation initiation factor 3 (eIF-3) complex, which is required for several steps in the initiation of protein synthesis. The eIF-3 complex associates with the 40S ribosome and facilitates the recruitment of eIF-1, eIF-1A, eIF-2:GTP:methionyl-tRNAi and eIF-5 to form the 43S pre-initiation complex (43S PIC). The eIF-3 complex stimulates mRNA recruitment to the 43S PIC and scanning of the mRNA for AUG recognition. The eIF-3 complex is also required for disassembly and recycling of post-termination ribosomal complexes and subsequently prevents premature joining of the 40S and 60S ribosomal subunits prior to initiation. The eIF-3 complex specifically targets and initiates translation of a subset of mRNAs involved in cell proliferation, including cell cycling, differentiation and apoptosis, and uses different modes of RNA stem-loop binding to exert either translational activation or repression. This subunit can bind 18S rRNA. (Microbial infection) In case of FCV infection, plays a role in the ribosomal termination-reinitiation event leading to the translation of VP2. The chain is Eukaryotic translation initiation factor 3 subunit G from Homo sapiens (Human).